A 494-amino-acid polypeptide reads, in one-letter code: Sulfate adenylyltransferase subunit 1 (494 aa).

Residues T24 to Q240 enclose the tr-type G domain. The tract at residues G33–S40 is G1. G33–S40 serves as a coordination point for GTP. The interval G91–D95 is G2. Residues D112–G115 are G3. Residues D112–H116 and N167–D170 contribute to the GTP site. Residues N167–D170 are G4. The G5 stretch occupies residues S204–L206.

The protein belongs to the TRAFAC class translation factor GTPase superfamily. Classic translation factor GTPase family. CysN/NodQ subfamily. Heterodimer composed of CysD, the smaller subunit, and CysN.

The catalysed reaction is sulfate + ATP + H(+) = adenosine 5'-phosphosulfate + diphosphate. It participates in sulfur metabolism; hydrogen sulfide biosynthesis; sulfite from sulfate: step 1/3. In terms of biological role, with CysD forms the ATP sulfurylase (ATPS) that catalyzes the adenylation of sulfate producing adenosine 5'-phosphosulfate (APS) and diphosphate, the first enzymatic step in sulfur assimilation pathway. APS synthesis involves the formation of a high-energy phosphoric-sulfuric acid anhydride bond driven by GTP hydrolysis by CysN coupled to ATP hydrolysis by CysD. This is Sulfate adenylyltransferase subunit 1 from Rhizobium rhizogenes (strain K84 / ATCC BAA-868) (Agrobacterium radiobacter).